A 455-amino-acid chain; its full sequence is MDTPRVLLSAVFLISFLWDLPGFQQASISSSSSSAELGSTKGMRSRKEGKMQRAPRDSDAGREGQEPQPRPQDEPRAQQPRAQEPPGRGPRVVPHEYMLSIYRTYSIAEKLGINASFFQSSKSANTITSFVDRGLDDLSHTPLRRQKYLFDVSMLSDKEELVGAELRLFRQAPSAPWGPPAGPLHVQLFPCLSPLLLDARTLDPQGAPPAGWEVFDVWQGLRHQPWKQLCLELRAAWGELDAGEAEARARGPQQPPPPDLRSLGFGRRVRPPQERALLVVFTRSQRKNLFAEMREQLGSAEAAGPGAGAEGSWPPPSGAPDARPWLPSPGRRRRRTAFASRHGKRHGKKSRLRCSKKPLHVNFKELGWDDWIIAPLEYEAYHCEGVCDFPLRSHLEPTNHAIIQTLMNSMDPGSTPPSCCVPTKLTPISILYIDAGNNVVYKQYEDMVVESCGCR.

A signal peptide spans 1 to 22 (MDTPRVLLSAVFLISFLWDLPG). A propeptide spanning residues 23–335 (FQQASISSSS…LPSPGRRRRR (313 aa)) is cleaved from the precursor. The interval 29–93 (SSSSSSAELG…EPPGRGPRVV (65 aa)) is disordered. Over residues 45–76 (SRKEGKMQRAPRDSDAGREGQEPQPRPQDEPR) the composition is skewed to basic and acidic residues. The segment covering 77-91 (AQQPRAQEPPGRGPR) has biased composition (low complexity). N-linked (GlcNAc...) asparagine glycosylation occurs at Asn114. Disordered stretches follow at residues 244–267 (EAEA…GFGR) and 300–351 (AEAA…KKSR). Over residues 330-351 (GRRRRRTAFASRHGKRHGKKSR) the composition is skewed to basic residues. 3 cysteine pairs are disulfide-bonded: Cys354–Cys420, Cys383–Cys452, and Cys387–Cys454.

This sequence belongs to the TGF-beta family. In terms of assembly, homodimer; disulfide-linked.

Its subcellular location is the secreted. Growth factor that controls proliferation and cellular differentiation in the retina and bone formation. Plays a key role in regulating apoptosis during retinal development. Establishes dorsal-ventral positional information in the retina and controls the formation of the retinotectal map. Required for normal formation of bones and joints in the limbs, skull, digits and axial skeleton. Plays a key role in establishing boundaries between skeletal elements during development. Regulation of GDF6 expression seems to be a mechanism for evolving species-specific changes in skeletal structures. Seems to positively regulate differentiation of chondrogenic tissue through the growth factor receptors subunits BMPR1A, BMPR1B, BMPR2 and ACVR2A, leading to the activation of SMAD1-SMAD5-SMAD8 complex. The regulation of chondrogenic differentiation is inhibited by NOG. Also involved in the induction of adipogenesis from mesenchymal stem cells. This mechanism acts through the growth factor receptors subunits BMPR1A, BMPR2 and ACVR2A and the activation of SMAD1-SMAD5-SMAD8 complex and MAPK14/p38. The polypeptide is Growth/differentiation factor 6 (GDF6) (Homo sapiens (Human)).